Reading from the N-terminus, the 142-residue chain is Hemoglobin subunit alpha (142 aa).

Residues 2 to 142 (VLSDANKQEI…LVHQLSSKYR (141 aa)) enclose the Globin domain. An O2-binding site is contributed by H60. Heme b is bound at residue H89.

The protein belongs to the globin family. In terms of assembly, heterotetramer of two alpha chains and two beta chains. As to expression, red blood cells.

Its function is as follows. Involved in oxygen transport from gills to the various peripheral tissues. This Bathyraja eatonii (Eaton's skate) protein is Hemoglobin subunit alpha (HBA).